The primary structure comprises 288 residues: Probable ketoamine kinase VV1_2562 (288 aa).

92 to 94 lines the ATP pocket; it reads NFL. Catalysis depends on Asp-195, which acts as the Proton acceptor.

It belongs to the fructosamine kinase family.

In terms of biological role, ketoamine kinase that phosphorylates ketoamines on the third carbon of the sugar moiety to generate ketoamine 3-phosphate. In Vibrio vulnificus (strain CMCP6), this protein is Probable ketoamine kinase VV1_2562.